Here is a 477-residue protein sequence, read N- to C-terminus: MSNIYIQEPPSNGKVLLKTTAGEIDIELWSKEAPKACRNFVQLCLEGYYDNTIFHRVVPEFIIQGGDPTGTGTGGESVFGKPFRDEFHSRLRFNRRGLVAMANAGPHDNGSQFFFTLGRADELNNKHTIFGKVTGDTIYNILRLAEVDIGEDERPVNPHKIKCTEVLFNPFDDIIPRIDKKTKKDEEEEGKKSKAKGTKNFNLLSFGEEAEEDEEEVNEVSKVMRGKSKSSHDLLKDDPRLSSVPAVEREKDSQSADSDKDEDEMSDDDDEEEDDEMDSDEKHQMKDRISNKLRKDPSKSIKQAENSDEAEERKSSRSEELRREARQLKRELKAAKEKKENNIKESETAKEAENTVANSALEEYLKEKEKYEEVRKKNTNKGVSREQQTLALLDRFKSKLTQAITEPPKEEEASDVDEENDKGWLSHVLQFEEKSGKVKDANMQDEDTFEIYDPRNPVNKRRREESKKIMKQKKERR.

The 156-residue stretch at 11–166 (SNGKVLLKTT…NPHKIKCTEV (156 aa)) folds into the PPIase cyclophilin-type domain. 2 disordered regions span residues 203-355 (LLSF…AENT) and 401-477 (TQAI…KERR). Over residues 208-218 (EEAEEDEEEVN) the composition is skewed to acidic residues. Basic and acidic residues-rich tracts occupy residues 230-240 (SSHDLLKDDPR) and 247-258 (VEREKDSQSADS). A compositionally biased stretch (acidic residues) spans 259–279 (DKDEDEMSDDDDEEEDDEMDS). Composition is skewed to basic and acidic residues over residues 280-299 (DEKH…DPSK), 311-353 (EERK…KEAE), and 430-442 (QFEE…KDAN). Residues 308 to 381 (DEAEERKSSR…EEVRKKNTNK (74 aa)) are a coiled coil.

This sequence belongs to the cyclophilin-type PPIase family. In terms of assembly, part of the activated spliceosome B/catalytic step 1 spliceosome, one of the forms of the spliceosome which has a well-formed active site but still cannot catalyze the branching reaction and is composed at least of 52 proteins, the U2, U5 and U6 snRNAs and the pre-mRNA. Recruited during early steps of activated spliceosome B maturation, it is probably one of the first proteins released from this complex as he matures to the spliceosome C complex. Component of the minor spliceosome, which splices U12-type introns.

The protein resides in the nucleus. Its function is as follows. As part of the spliceosome, plays a role in pre-mRNA splicing. Probable inactive PPIase with no peptidyl-prolyl cis-trans isomerase activity. The chain is Spliceosome-associated protein CWC27 homolog (cwc27) from Xenopus laevis (African clawed frog).